We begin with the raw amino-acid sequence, 233 residues long: MNAIILAAGLGSRFKDITQSTHKSLLDIHGTPNLERTLTFLRQANIDNIVIVTGYLHEQFEYLKKKYDCTLIYNEKYREYNSIYSFSLAQDFFNDCYVIDADVVLNRNIFLTKPSHSKYFTVIRSKTHNEWLPILNSNGQVIRIDIGSLNQPSLSGISFWTTQDCNIILTLLKEYTSEVRLKNPKLYWDTIPMEYIEKLNIYTEQLNSDDIFEMDNLDDYHHILQKLTPNKEK.

CDP-choline-binding residues include Leu-6, Ala-8, Gly-9, Tyr-80, Ser-85, and Ala-101. A Mg(2+)-binding site is contributed by Asp-102. Tyr-187 lines the CDP-choline pocket. Residues Glu-213 and Asp-215 each coordinate Mg(2+).

The protein belongs to the LicC/PntC cytidylyltransferase family. Mg(2+) is required as a cofactor.

It catalyses the reaction phosphocholine + CTP + H(+) = CDP-choline + diphosphate. Its pathway is lipopolysaccharide biosynthesis. In terms of biological role, cytidylyltransferase involved in the biosynthesis of lipopolysaccharides (LPS), a necessary component and antigenic determinant of the outer membrane that has been shown to be an important factor in the host-parasite interaction in a number of Gram-negative species. Catalyzes the activation of phosphocholine (P-Cho) to CDP-choline (CDP-Cho). LicC is critical for the expression of the 6A2-specific epitope. The chain is Choline-phosphate cytidylyltransferase from Haemophilus influenzae (strain ATCC 51907 / DSM 11121 / KW20 / Rd).